Reading from the N-terminus, the 393-residue chain is S-adenosylmethionine synthase 1 (393 aa).

A Mg(2+)-binding site is contributed by glutamate 9. Residue histidine 15 coordinates ATP. Residue glutamate 43 participates in K(+) binding. The L-methionine site is built by glutamate 56 and glutamine 99. Residues 167 to 169 (DGK), 235 to 238 (SGRF), aspartate 246, 252 to 253 (RK), alanine 269, lysine 273, and lysine 277 each bind ATP. Residue aspartate 246 participates in L-methionine binding. Residue lysine 277 coordinates L-methionine.

It belongs to the AdoMet synthase family. Homotetramer. Mn(2+) is required as a cofactor. Requires Mg(2+) as cofactor. The cofactor is Co(2+). K(+) serves as cofactor. It depends on NH4(+) as a cofactor. As to expression, mostly expressed in roots, and, to a lower extent, in hypocotyls and cotyledons.

The protein localises to the cytoplasm. It catalyses the reaction L-methionine + ATP + H2O = S-adenosyl-L-methionine + phosphate + diphosphate. It functions in the pathway amino-acid biosynthesis; S-adenosyl-L-methionine biosynthesis; S-adenosyl-L-methionine from L-methionine: step 1/1. With respect to regulation, inhibited by products of SAMS reaction (SAM, Pi, PPi), substrate analogs (cycloleucine and ethionine), and alternative nucleotides (GTP, CTP and ADP). Strongly repressed by PPPi. In terms of biological role, catalyzes the formation of S-adenosylmethionine from methionine and ATP. The reaction comprises two steps that are both catalyzed by the same enzyme: formation of S-adenosylmethionine (AdoMet) and triphosphate, and subsequent hydrolysis of the triphosphate. This is S-adenosylmethionine synthase 1 (SAMS1) from Catharanthus roseus (Madagascar periwinkle).